The following is a 133-amino-acid chain: MEFKELVDAAEKWCTGNPFDLIFAEDVDERRLDFYAEPGISFYVLCPDNLTGGTDNFHVWSESEDCLPFLQLAQDYISSCGKKTLLEVLDKVFRSFRPLLGLPDIDDDTFDQYHADVEEEPEPDHQQMGVSQQ.

It belongs to the MTURN family.

The protein resides in the cytoplasm. In terms of biological role, may be involved in early neuronal development. May play a role in promoting megakaryocyte differentiation. The chain is Maturin (mturn) from Danio rerio (Zebrafish).